A 527-amino-acid chain; its full sequence is Heat shock factor protein HSF8 (527 aa).

Residues 1–13 show a composition bias toward low complexity; sequence MEPNSSGSGKAAV. Disordered regions lie at residues 1 to 37, 130 to 160, 243 to 275, 300 to 343, and 476 to 501; these read MEPN…PSAN, RRKP…HSAS, NESN…ADGQ, SPRL…TSGK, and QSPS…QING. Pro residues predominate over residues 25–37; the sequence is QPAPAPAPMPSAN. The DNA-binding element occupies 39–133; the sequence is PPPFLVKTYD…LLKSISRRKP (95 aa). Positions 136 to 157 are enriched in low complexity; that stretch reads GHAQQQQQPHGHAQQQMQPPGH. 2 stretches are compositionally biased toward polar residues: residues 319 to 328 and 491 to 501; these read SPQSNASSGR and NTSETKPQING.

Belongs to the HSF family. As to quaternary structure, homotrimer. Exhibits temperature-dependent phosphorylation.

It localises to the nucleus. In terms of biological role, DNA-binding protein that specifically binds heat shock promoter elements (HSE) and activates transcription. In Solanum peruvianum (Peruvian tomato), this protein is Heat shock factor protein HSF8 (HSF8).